We begin with the raw amino-acid sequence, 273 residues long: Small ribosomal subunit protein uS2 (273 aa).

The segment at 244-273 is disordered; that stretch reads SDEEANSSAEENENRQEDLLAKKYDSSEAN. Residues 255-273 are compositionally biased toward basic and acidic residues; it reads NENRQEDLLAKKYDSSEAN.

The protein belongs to the universal ribosomal protein uS2 family.

In Chlamydia felis (strain Fe/C-56) (Chlamydophila felis), this protein is Small ribosomal subunit protein uS2.